A 62-amino-acid chain; its full sequence is Metallothionein-4 (62 aa).

A divalent metal cation-binding residues include Cys-6, Cys-8, Cys-14, Cys-16, Cys-20, Cys-22, Cys-25, Cys-27, Cys-34, Cys-35, Cys-37, Cys-38, Cys-42, Cys-45, Cys-49, Cys-51, Cys-58, Cys-60, and Cys-61.

The protein belongs to the metallothionein superfamily. Type 1 family.

Its function is as follows. Seems to bind zinc and copper. Could play a special role in regulating zinc metabolism during the differentiation of stratified epithelia. The protein is Metallothionein-4 (MT4) of Homo sapiens (Human).